We begin with the raw amino-acid sequence, 554 residues long: MMHLLFALLLSALPCWVWAQACSDEARAHVSTLAEQIRQWDDSYHRLGQSPVSDELYDQARQRLAQWHQCFPAPTATPNTPLASSRGAQPHPVAHTGLEKLLDEHAVDAWLGTRKDVWIQPKVDGVAVTLVYQQGRLRQVISRGDGVMGHDWSASARKIPGIVQQLPDPIDLVLQGELYWRLDDHVQSASGGLNARSKVAGLMNRKHLGDTDAAGIGLFVWAWPQGPAAFTERLSTLKRWGFTDTQRFSQPIRNISEAAHWRAYWYGHPLPFASDGVVLHQAQHAPAERWQVSTPYWAAAWKYPTTKALALVRDVQFKIGRTGRITPMLELEPVRLDDRQISRVSAGSLKRWQSLDIRPGDHVSISLAGQVIPRLDEVILRSSTRADLPVPNPGKFHALSCWQLDPGCEEQLLARLSWLSGNQGLALPHIGRETWSVLIQAGLIAGFLDWLTLDTAELANIDGFGDRTRARVVDSFHSARQRPFAQWLKALGVPPAARNNLEGDWQTLVARDTQAWLAIDGIGPGRAAQLSAFFRDPHVQALAETLRVAGIDGF.

The active-site N6-AMP-lysine intermediate is K122.

It belongs to the NAD-dependent DNA ligase family. LigB subfamily.

The catalysed reaction is NAD(+) + (deoxyribonucleotide)n-3'-hydroxyl + 5'-phospho-(deoxyribonucleotide)m = (deoxyribonucleotide)n+m + AMP + beta-nicotinamide D-nucleotide.. Catalyzes the formation of phosphodiester linkages between 5'-phosphoryl and 3'-hydroxyl groups in double-stranded DNA using NAD as a coenzyme and as the energy source for the reaction. This Pseudomonas fluorescens (strain SBW25) protein is DNA ligase B.